A 351-amino-acid chain; its full sequence is Probable protein phosphatase 2C 8 (351 aa).

Residues 1-63 (MLEKESDLTA…REAEEDKPSF (63 aa)) are disordered. Residues 54–63 (REAEEDKPSF) show a composition bias toward basic and acidic residues. Residues 74-348 (EADVAEDKGA…DNCTAIVIVF (275 aa)) enclose the PPM-type phosphatase domain. Mn(2+) contacts are provided by Asp-114, Gly-115, Asp-295, and Asp-339.

It belongs to the PP2C family. Requires Mg(2+) as cofactor. Mn(2+) serves as cofactor.

The catalysed reaction is O-phospho-L-seryl-[protein] + H2O = L-seryl-[protein] + phosphate. The enzyme catalyses O-phospho-L-threonyl-[protein] + H2O = L-threonyl-[protein] + phosphate. This chain is Probable protein phosphatase 2C 8, found in Arabidopsis thaliana (Mouse-ear cress).